Here is a 453-residue protein sequence, read N- to C-terminus: Adenylyltransferase and sulfurtransferase MOCS3 (453 aa).

T62 is modified (phosphothreonine). ATP-binding positions include G101, D122, 129–133 (SNFHR), K146, and 190–191 (DN). Residues C231 and C234 each contribute to the Zn(2+) site. C248 functions as the Glycyl thioester intermediate; for adenylyltransferase activity in the catalytic mechanism. The Zn(2+) site is built by C306 and C309. Positions 355–451 (QAQPHLLIDV…WTNSVDPSFP (97 aa)) constitute a Rhodanese domain. C410 serves as the catalytic Cysteine persulfide intermediate; for sulfurtransferase activity.

In the N-terminal section; belongs to the HesA/MoeB/ThiF family. UBA4 subfamily. Zn(2+) is required as a cofactor.

It localises to the cytoplasm. Its subcellular location is the cytosol. The catalysed reaction is [molybdopterin-synthase sulfur-carrier protein]-C-terminal Gly-Gly + ATP + H(+) = [molybdopterin-synthase sulfur-carrier protein]-C-terminal Gly-Gly-AMP + diphosphate. It catalyses the reaction [molybdopterin-synthase sulfur-carrier protein]-C-terminal Gly-Gly-AMP + S-sulfanyl-L-cysteinyl-[cysteine desulfurase] + AH2 = [molybdopterin-synthase sulfur-carrier protein]-C-terminal-Gly-aminoethanethioate + L-cysteinyl-[cysteine desulfurase] + A + AMP + 2 H(+). It participates in tRNA modification; 5-methoxycarbonylmethyl-2-thiouridine-tRNA biosynthesis. Its pathway is cofactor biosynthesis; molybdopterin biosynthesis. Plays a central role in 2-thiolation of mcm(5)S(2)U at tRNA wobble positions of cytosolic tRNA(Lys), tRNA(Glu) and tRNA(Gln). Also essential during biosynthesis of the molybdenum cofactor. Acts by mediating the C-terminal thiocarboxylation of sulfur carriers URM1 and MOCS2A. Its N-terminus first activates URM1 and MOCS2A as acyl-adenylates (-COAMP), then the persulfide sulfur on the catalytic cysteine is transferred to URM1 and MOCS2A to form thiocarboxylation (-COSH) of their C-terminus. The reaction probably involves hydrogen sulfide that is generated from the persulfide intermediate and that acts as a nucleophile towards URM1 and MOCS2A. Subsequently, a transient disulfide bond is formed. Does not use thiosulfate as sulfur donor; NFS1 probably acting as a sulfur donor for thiocarboxylation reactions. In Drosophila yakuba (Fruit fly), this protein is Adenylyltransferase and sulfurtransferase MOCS3.